The chain runs to 140 residues: uncharacterized protein (140 aa).

This is an uncharacterized protein from Spirochaeta aurantia.